A 361-amino-acid polypeptide reads, in one-letter code: Phospho-N-acetylmuramoyl-pentapeptide-transferase (361 aa).

10 helical membrane passes run 25 to 45, 73 to 93, 97 to 117, 132 to 152, 167 to 187, 200 to 220, 240 to 260, 264 to 284, 289 to 309, and 338 to 358; these read RAVM…PWVI, TMGG…WADL, YVWL…YDDW, FKMA…IATA, TVAY…VIVG, GLAA…AYVA, VVVF…FNAY, VFMG…VAVI, IVLF…MIQV, and QVVV…LSTL.

This sequence belongs to the glycosyltransferase 4 family. MraY subfamily. It depends on Mg(2+) as a cofactor.

The protein resides in the cell inner membrane. The enzyme catalyses UDP-N-acetyl-alpha-D-muramoyl-L-alanyl-gamma-D-glutamyl-meso-2,6-diaminopimeloyl-D-alanyl-D-alanine + di-trans,octa-cis-undecaprenyl phosphate = di-trans,octa-cis-undecaprenyl diphospho-N-acetyl-alpha-D-muramoyl-L-alanyl-D-glutamyl-meso-2,6-diaminopimeloyl-D-alanyl-D-alanine + UMP. It functions in the pathway cell wall biogenesis; peptidoglycan biosynthesis. In terms of biological role, catalyzes the initial step of the lipid cycle reactions in the biosynthesis of the cell wall peptidoglycan: transfers peptidoglycan precursor phospho-MurNAc-pentapeptide from UDP-MurNAc-pentapeptide onto the lipid carrier undecaprenyl phosphate, yielding undecaprenyl-pyrophosphoryl-MurNAc-pentapeptide, known as lipid I. This Chromobacterium violaceum (strain ATCC 12472 / DSM 30191 / JCM 1249 / CCUG 213 / NBRC 12614 / NCIMB 9131 / NCTC 9757 / MK) protein is Phospho-N-acetylmuramoyl-pentapeptide-transferase.